A 359-amino-acid chain; its full sequence is Membrane-bound lytic murein transglycosylase C (359 aa).

An N-terminal signal peptide occupies residues 1–16 (MKKYLALALIAPLLIS). C17 is lipidated: N-palmitoyl cysteine. The S-diacylglycerol cysteine moiety is linked to residue C17.

This sequence belongs to the transglycosylase Slt family.

The protein localises to the cell outer membrane. The enzyme catalyses Exolytic cleavage of the (1-&gt;4)-beta-glycosidic linkage between N-acetylmuramic acid (MurNAc) and N-acetylglucosamine (GlcNAc) residues in peptidoglycan, from either the reducing or the non-reducing ends of the peptidoglycan chains, with concomitant formation of a 1,6-anhydrobond in the MurNAc residue.. Functionally, murein-degrading enzyme. May play a role in recycling of muropeptides during cell elongation and/or cell division. The chain is Membrane-bound lytic murein transglycosylase C from Escherichia coli (strain SE11).